A 332-amino-acid polypeptide reads, in one-letter code: MNKISRIIITPGEPAGIGFDLVVLISQKIWRSELVICCDPDILVKRAKDHGIKLKLHFYNKNLSPKVREKGELTIIPIKVNSNVTRGILNINNSYYVINTLTRACLGCINKEFSALVTGPVHKGIIKDSGIKFIGHTEFLAGFSLCKNPVMMLMYNSLRIALATNHIPIKDISKCINFNLIRKKLIVIFNSLRNIFKINNPCIYVCGLNPHAGESGHIGTEEINIIQPAISSLKYLPCKIIGPISADSIFQQKYLKDADAILAMYHDQGLPMIKYIGFRKSVNITLGLPFIRTSVDHGTALNIKNLNEISSKSMEKAISLAIDISQDNSIKK.

Residues His136 and Thr137 each contribute to the substrate site. A divalent metal cation contacts are provided by His166, His211, and His266. Substrate-binding residues include Lys274, Asn283, and Arg292.

This sequence belongs to the PdxA family. In terms of assembly, homodimer. It depends on Zn(2+) as a cofactor. Requires Mg(2+) as cofactor. The cofactor is Co(2+).

It is found in the cytoplasm. It catalyses the reaction 4-(phosphooxy)-L-threonine + NAD(+) = 3-amino-2-oxopropyl phosphate + CO2 + NADH. It participates in cofactor biosynthesis; pyridoxine 5'-phosphate biosynthesis; pyridoxine 5'-phosphate from D-erythrose 4-phosphate: step 4/5. Its function is as follows. Catalyzes the NAD(P)-dependent oxidation of 4-(phosphooxy)-L-threonine (HTP) into 2-amino-3-oxo-4-(phosphooxy)butyric acid which spontaneously decarboxylates to form 3-amino-2-oxopropyl phosphate (AHAP). The chain is 4-hydroxythreonine-4-phosphate dehydrogenase from Wigglesworthia glossinidia brevipalpis.